A 131-amino-acid chain; its full sequence is D-ribose pyranase (131 aa).

H20 serves as the catalytic Proton donor. Substrate is bound by residues D28, H98, and 120 to 122 (YAN).

Belongs to the RbsD / FucU family. RbsD subfamily. As to quaternary structure, homodecamer.

It localises to the cytoplasm. It catalyses the reaction beta-D-ribopyranose = beta-D-ribofuranose. It functions in the pathway carbohydrate metabolism; D-ribose degradation; D-ribose 5-phosphate from beta-D-ribopyranose: step 1/2. Its function is as follows. Catalyzes the interconversion of beta-pyran and beta-furan forms of D-ribose. This chain is D-ribose pyranase, found in Clostridium botulinum (strain Eklund 17B / Type B).